Reading from the N-terminus, the 336-residue chain is Eukaryotic translation initiation factor 3 subunit H (336 aa).

In terms of domain architecture, MPN spans valine 21–alanine 154.

The protein belongs to the eIF-3 subunit H family. Component of the eukaryotic translation initiation factor 3 (eIF-3) complex.

It is found in the cytoplasm. Functionally, component of the eukaryotic translation initiation factor 3 (eIF-3) complex, which is involved in protein synthesis of a specialized repertoire of mRNAs and, together with other initiation factors, stimulates binding of mRNA and methionyl-tRNAi to the 40S ribosome. The eIF-3 complex specifically targets and initiates translation of a subset of mRNAs involved in cell proliferation. The chain is Eukaryotic translation initiation factor 3 subunit H from Aedes aegypti (Yellowfever mosquito).